A 454-amino-acid chain; its full sequence is MNFDSIIKNGLVILENGEQEVEVGIKDGKIAAIGQDLGTSAKIIDAKGSIVSPGMIDAHVHITEPGGGYRDEWEGYDTGTRAAAKGGVTTFIEMPLNQVPATVDEESIQEKFKAGKGKLSVDVASYGGLVPFDLDGGIQELDSNGVVAYKCFLATCGDRSIEGDFMNVDDYSLYEGMKQIAKTGKILSIHAENAAITDKLGEIASKNGETSLRAYVDSRPVFTEVEPIRKIILFAKETGCRVHIVHIACEEGVDEIVKAQQEGVDITCETCTHYLYFYKEELDHIGPVVKCSPPIREQSRLEGMWNRVLNGDISFVTSDHSPCTPDLKATDNAFEAWGGIAGLQNNVDVLFDEGVQKRNMPLSKFAAIIATNPAKRFNLASKGSIAVGKDADFVFIKKDAPYELKAEDLAYRHKISPYIGRKIGAQVVKTILRGVEIYDKEKGISNEKVGRFIP.

Residues His-59, His-61, Lys-150, His-190, His-246, and Asp-319 each coordinate Zn(2+). Lys-150 is modified (N6-carboxylysine).

This sequence belongs to the metallo-dependent hydrolases superfamily. Allantoinase family. In terms of assembly, homotetramer. Zn(2+) is required as a cofactor. Carboxylation allows a single lysine to coordinate two zinc ions.

The catalysed reaction is (S)-allantoin + H2O = allantoate + H(+). The protein operates within nitrogen metabolism; (S)-allantoin degradation; allantoate from (S)-allantoin: step 1/1. In terms of biological role, catalyzes the conversion of allantoin (5-ureidohydantoin) to allantoic acid by hydrolytic cleavage of the five-member hydantoin ring. In Bacillus licheniformis (strain ATCC 14580 / DSM 13 / JCM 2505 / CCUG 7422 / NBRC 12200 / NCIMB 9375 / NCTC 10341 / NRRL NRS-1264 / Gibson 46), this protein is Allantoinase.